The sequence spans 533 residues: Protein disulfide isomerase-like 1-5 (533 aa).

An N-terminal signal peptide occupies residues 1–22 (MRARRVVAAAAVLLLFAVVAVA). 2 consecutive Thioredoxin domains span residues 51 to 196 (LGGG…KDQT) and 387 to 516 (LLEG…EKLQ). The Nucleophile role is filled by C97. N151 carries N-linked (GlcNAc...) asparagine glycosylation. Active-site nucleophile residues include C436 and C439. A disulfide bond links C436 and C439. The short motif at 530 to 533 (KDEL) is the Prevents secretion from ER element.

The protein belongs to the protein disulfide isomerase family.

Its subcellular location is the endoplasmic reticulum lumen. It catalyses the reaction Catalyzes the rearrangement of -S-S- bonds in proteins.. In terms of biological role, acts as a protein-folding catalyst that interacts with nascent polypeptides to catalyze the formation, isomerization, and reduction or oxidation of disulfide bonds. May play a role in storage protein biogenesis. The polypeptide is Protein disulfide isomerase-like 1-5 (PDIL1-5) (Oryza sativa subsp. japonica (Rice)).